The following is a 541-amino-acid chain: Chaperonin GroEL (541 aa).

Residues 29–32 (TLGP), 86–90 (DGTTT), glycine 413, 476–478 (NAA), and aspartate 492 each bind ATP. Positions 521 to 541 (KPEENAPAAPAAPNPGMGGMM) are disordered. The span at 525-535 (NAPAAPAAPNP) shows a compositional bias: low complexity.

Belongs to the chaperonin (HSP60) family. Forms a cylinder of 14 subunits composed of two heptameric rings stacked back-to-back. Interacts with the co-chaperonin GroES.

Its subcellular location is the cytoplasm. It carries out the reaction ATP + H2O + a folded polypeptide = ADP + phosphate + an unfolded polypeptide.. Functionally, together with its co-chaperonin GroES, plays an essential role in assisting protein folding. The GroEL-GroES system forms a nano-cage that allows encapsulation of the non-native substrate proteins and provides a physical environment optimized to promote and accelerate protein folding. This is Chaperonin GroEL from Lactiplantibacillus plantarum (strain ATCC BAA-793 / NCIMB 8826 / WCFS1) (Lactobacillus plantarum).